A 274-amino-acid polypeptide reads, in one-letter code: Large ribosomal subunit protein uL2 (274 aa).

Positions 220-265 are disordered; it reads VRGAAMNPRDHPHGGGEGRAPRGMSTPKTKWGKPARGVKTRHNPRF. A compositionally biased stretch (basic and acidic residues) spans 227–239; it reads PRDHPHGGGEGRA. Over residues 249 to 262 the composition is skewed to basic residues; sequence KWGKPARGVKTRHN.

The protein belongs to the universal ribosomal protein uL2 family. As to quaternary structure, part of the 50S ribosomal subunit. Forms a bridge to the 30S subunit in the 70S ribosome.

Functionally, one of the primary rRNA binding proteins. Required for association of the 30S and 50S subunits to form the 70S ribosome, for tRNA binding and peptide bond formation. It has been suggested to have peptidyltransferase activity; this is somewhat controversial. Makes several contacts with the 16S rRNA in the 70S ribosome. This chain is Large ribosomal subunit protein uL2, found in Chloroflexus aurantiacus (strain ATCC 29364 / DSM 637 / Y-400-fl).